The chain runs to 565 residues: CTP synthase (565 aa).

Positions 1–272 are amidoligase domain; the sequence is MARPKNVKHI…DLRVMKKLGL (272 aa). Residue Ser-18 participates in CTP binding. Ser-18 contributes to the UTP binding site. ATP is bound at residue 19–24; it reads SLGKGI. Tyr-59 contacts L-glutamine. Residue Asp-76 participates in ATP binding. Mg(2+) contacts are provided by Asp-76 and Glu-146. CTP contacts are provided by residues 153–155, 193–198, and Lys-229; these read DIE and KTKPTQ. Residues 193–198 and Lys-229 each bind UTP; that span reads KTKPTQ. Positions 299–543 constitute a Glutamine amidotransferase type-1 domain; that stretch reads TIGVCGKYTE…VQAAKEFAMG (245 aa). Gly-363 contributes to the L-glutamine binding site. The active-site Nucleophile; for glutamine hydrolysis is the Cys-390. L-glutamine contacts are provided by residues 391 to 394, Glu-414, and Arg-471; that span reads LGMQ. Residues His-516 and Glu-518 contribute to the active site.

The protein belongs to the CTP synthase family. Homotetramer.

The enzyme catalyses UTP + L-glutamine + ATP + H2O = CTP + L-glutamate + ADP + phosphate + 2 H(+). It catalyses the reaction L-glutamine + H2O = L-glutamate + NH4(+). The catalysed reaction is UTP + NH4(+) + ATP = CTP + ADP + phosphate + 2 H(+). The protein operates within pyrimidine metabolism; CTP biosynthesis via de novo pathway; CTP from UDP: step 2/2. Its activity is regulated as follows. Allosterically activated by GTP, when glutamine is the substrate; GTP has no effect on the reaction when ammonia is the substrate. The allosteric effector GTP functions by stabilizing the protein conformation that binds the tetrahedral intermediate(s) formed during glutamine hydrolysis. Inhibited by the product CTP, via allosteric rather than competitive inhibition. Functionally, catalyzes the ATP-dependent amination of UTP to CTP with either L-glutamine or ammonia as the source of nitrogen. Regulates intracellular CTP levels through interactions with the four ribonucleotide triphosphates. The sequence is that of CTP synthase from Chlorobaculum parvum (strain DSM 263 / NCIMB 8327) (Chlorobium vibrioforme subsp. thiosulfatophilum).